The following is a 767-amino-acid chain: Photosystem I P700 chlorophyll a apoprotein A1 (767 aa).

The tract at residues 1–22 is disordered; that stretch reads MTISPPESGEKNKKVLEDPVKA. Over residues 8-22 the composition is skewed to basic and acidic residues; that stretch reads SGEKNKKVLEDPVKA. 8 helical membrane passes run 76 to 99, 162 to 185, 201 to 225, 309 to 327, 368 to 391, 407 to 433, 455 to 477, and 558 to 576; these read IFSA…FHGA, LMAL…FHYH, LNHH…HIGA, VSHH…GHMY, RHAQ…HHMY, LGLF…IAMV, ALIS…LYIH, and LMIH…LILL. The [4Fe-4S] cluster site is built by Cys-600 and Cys-609. Transmembrane regions (helical) follow at residues 616-637 and 681-703; these read HVFL…HFSW and ISMY…MFLF. His-692 lines the divinylchlorophyll a' pocket. Residues Met-700 and Tyr-708 each coordinate divinyl chlorophyll a. Residue Trp-709 participates in phylloquinone binding. The helical transmembrane segment at 741 to 761 threads the bilayer; sequence AVGVTHFLVGGIATTWAFFHA.

It belongs to the PsaA/PsaB family. As to quaternary structure, the PsaA/B heterodimer binds the P700 divinyl chlorophyll special pair and subsequent electron acceptors. PSI consists of a core antenna complex that captures photons, and an electron transfer chain that converts photonic excitation into a charge separation. The cyanobacterial PSI reaction center is composed of one copy each of PsaA,B,C,D,E,F,I,J,K,L,M and X, and forms trimeric complexes. It depends on PSI electron transfer chain: 5 divinyl chlorophyll a, 1 divinyl chlorophyll a', 2 phylloquinones and 3 4Fe-4S clusters. PSI core antenna: 90 divinyl chlorophyll a, 22 carotenoids, 3 phospholipids and 1 galactolipid. P700 is a divinyl chlorophyll a/divinyl chlorophyll a' dimer, A0 is one or more divinyl chlorophyll a, A1 is one or both phylloquinones and FX is a shared 4Fe-4S iron-sulfur center. as a cofactor.

It is found in the cellular thylakoid membrane. It carries out the reaction reduced [plastocyanin] + hnu + oxidized [2Fe-2S]-[ferredoxin] = oxidized [plastocyanin] + reduced [2Fe-2S]-[ferredoxin]. In terms of biological role, psaA and PsaB bind P700, the primary electron donor of photosystem I (PSI), as well as the electron acceptors A0, A1 and FX. PSI is a plastocyanin/cytochrome c6-ferredoxin oxidoreductase, converting photonic excitation into a charge separation, which transfers an electron from the donor P700 chlorophyll pair to the spectroscopically characterized acceptors A0, A1, FX, FA and FB in turn. Oxidized P700 is reduced on the lumenal side of the thylakoid membrane by plastocyanin or cytochrome c6. This chain is Photosystem I P700 chlorophyll a apoprotein A1, found in Prochlorococcus marinus (strain MIT 9301).